Reading from the N-terminus, the 662-residue chain is Retaining alpha-galactosidase (662 aa).

An N-terminal signal peptide occupies residues 1 to 19 (MKKLTFLLLCVLCTLSLQA). E174 serves as a coordination point for Ca(2+). D415 (nucleophile) is an active-site residue. Residues E464 and E470 each coordinate Ca(2+). Catalysis depends on E470, which acts as the Proton donor/acceptor.

It belongs to the glycosyl hydrolase 97 family. As to quaternary structure, monomer. Ca(2+) serves as cofactor.

The catalysed reaction is Hydrolysis of terminal, non-reducing alpha-D-galactose residues in alpha-D-galactosides, including galactose oligosaccharides, galactomannans and galactolipids.. Its activity is regulated as follows. Inhibited by EDTA in vitro. In terms of biological role, galactosidase that is able to hydrolyze the alpha-1,6 disaccharide melibiose and the synthetic p-nitrophenyl alpha-galactoside substrate (pNP-Gal), with retention of the anomeric configuration. Does not hydrolyze DNP-Glc or pNP-Glc. This is Retaining alpha-galactosidase from Bacteroides thetaiotaomicron (strain ATCC 29148 / DSM 2079 / JCM 5827 / CCUG 10774 / NCTC 10582 / VPI-5482 / E50).